Consider the following 610-residue polypeptide: MSEIFDAKAFLKTVTSQPGVYRMYDAGGTVIYVGKAKDLKKRLSSYFRSNLASRKTEALVAQIQHIDVTVTHTETEALLLEHNYIKLYQPRYNVLLRDDKSYPFIFLSGDTHPRLAMHRGAKHAKGEYFGPFPNGYAVRETLALLQKIFPVRQCENSVYRNRSRPCLQYQIGRCLGPCVAGLVSEEEYAQQVEYVRLFLSGKDDQVLTQLIARMEKASQDLAFEEAARIRDQIQAVRRVTERQFVSNAGDDLDVIGVAFDAGMACVHVLFIRQGKVLGSRSYFPKVPGGTELGEVVETFVGQFYLQGSQMRTLPGEILLDFNLSDKTLLADSLSELAGRRIHVQTKPRGDRARYLKLARTNAATALITKLSQQSTITQRLTALAAVLKLPAIKRMECFDISHTMGEQTVASCVVFDANGPLRAEYRRYNIAGITPGDDYAAMNQVLRRRYGKAIEESKIPDVILIDGGKGQLAQAKAVFAELDVPWDKHRPLLLGVAKGADRKAGLETLFFEPEGEGFSLPPDSPALHVIQHIRDESHDHAIGGHRKKRAKVKNTSTLETIEGVGPKRRQMLLKYMGGLQGLRNASVEEIAKVPGISQGLAEKIFWSLKH.

The 79-residue stretch at 16 to 94 (SQPGVYRMYD…IKLYQPRYNV (79 aa)) folds into the GIY-YIG domain. The UVR domain occupies 204 to 239 (DQVLTQLIARMEKASQDLAFEEAARIRDQIQAVRRV).

The protein belongs to the UvrC family. In terms of assembly, interacts with UvrB in an incision complex.

It is found in the cytoplasm. The UvrABC repair system catalyzes the recognition and processing of DNA lesions. UvrC both incises the 5' and 3' sides of the lesion. The N-terminal half is responsible for the 3' incision and the C-terminal half is responsible for the 5' incision. The chain is UvrABC system protein C from Salmonella dublin (strain CT_02021853).